A 1035-amino-acid polypeptide reads, in one-letter code: Unconventional myosin IC (1035 aa).

Residues 21–703 (GVQDFVLLEN…TLFDTEDAYQ (683 aa)) form the Myosin motor domain. Position 114 to 121 (114 to 121 (GESGSGKT)) interacts with ATP. At Ser304 the chain carries Phosphoserine. Thr310 is modified (phosphothreonine). The segment at 578 to 600 (LNNLMDILMCKEPSYIRCIKPND) is actin-binding. 3 consecutive IQ domains span residues 696-728 (FDTE…KYLK), 729-751 (LRAQ…AAKK), and 752-779 (RREA…FNEE). Positions 857–1035 (KNNYASSVST…KGHLVIIGTQ (179 aa)) constitute a TH1 domain.

Belongs to the TRAFAC class myosin-kinesin ATPase superfamily. Myosin family. In terms of assembly, binds F-actin. In the embryo, expressed in gastric caeca, midgut cells of the proventriculus, and in the mid and hindgut. In the larval and adult gut brush border, expressed in the microvilli. Also expressed at high levels in follicle cells during oogenesis.

The protein localises to the cytoplasm. It is found in the cell cortex. The protein resides in the cell membrane. Functionally, unconventional myosin that functions as actin-based motor protein with ATPase activity. Binds to membranes enriched in phosphatidylinositol 4-5-bisphosphate, and can glide along actin filaments when anchored to a lipid bilayer. Functions as antagonist for Myo31DF, an unconventional myosin with an essential role in the establishment of body left-right asymmetry. In Drosophila melanogaster (Fruit fly), this protein is Unconventional myosin IC (Myo61F).